The primary structure comprises 390 residues: Protein phosphatase 1B (390 aa).

Residues 1-14 (MGAFLDKPKTEKHN) are compositionally biased toward basic and acidic residues. The interval 1-20 (MGAFLDKPKTEKHNAHGAGN) is disordered. G2 carries the N-myristoyl glycine lipid modification. K12 participates in a covalent cross-link: Glycyl lysine isopeptide (Lys-Gly) (interchain with G-Cter in ISG15). A PPM-type phosphatase domain is found at 23–295 (RYGLSSMQGW…DNMSIVLVCF (273 aa)). Positions 60, 61, 243, and 286 each coordinate Mn(2+). The tract at residues 371-390 (NPNKDNDGGAGDLEDSLVAL) is disordered. S386 is modified (phosphoserine).

Belongs to the PP2C family. In terms of assembly, monomer. Interacts with PAK6. Interacts with the phosphorylated form of IKBKB/IKKB. Mg(2+) serves as cofactor. Requires Mn(2+) as cofactor. Post-translationally, isgylation negatively regulates its activity. In terms of processing, N-myristoylation is essential for the recognition of its substrates for dephosphorylation.

Its subcellular location is the cytoplasm. The protein localises to the cytosol. It localises to the membrane. It carries out the reaction O-phospho-L-seryl-[protein] + H2O = L-seryl-[protein] + phosphate. The catalysed reaction is O-phospho-L-threonyl-[protein] + H2O = L-threonyl-[protein] + phosphate. In terms of biological role, enzyme with a broad specificity. Dephosphorylates PRKAA1 and PRKAA2. Inhibits TBK1-mediated antiviral signaling by dephosphorylating it at 'Ser-172'. Plays an important role in the termination of TNF-alpha-mediated NF-kappa-B activation through dephosphorylating and inactivating IKBKB/IKKB. The sequence is that of Protein phosphatase 1B (Ppm1b) from Rattus norvegicus (Rat).